The primary structure comprises 451 residues: tRNA-2-methylthio-N(6)-dimethylallyladenosine synthase (451 aa).

An MTTase N-terminal domain is found at 6 to 122 (RHYHITTFGC…LQDLLEQVFN (117 aa)). [4Fe-4S] cluster is bound by residues Cys-15, Cys-51, Cys-85, Cys-157, Cys-161, and Cys-164. Residues 143 to 380 (RDSKITAWVN…NHLVGVKAAD (238 aa)) form the Radical SAM core domain. The TRAM domain occupies 383–447 (QRYMGRIEEV…PFSLTGEVKE (65 aa)).

Belongs to the methylthiotransferase family. MiaB subfamily. Monomer. [4Fe-4S] cluster serves as cofactor.

It is found in the cytoplasm. It catalyses the reaction N(6)-dimethylallyladenosine(37) in tRNA + (sulfur carrier)-SH + AH2 + 2 S-adenosyl-L-methionine = 2-methylsulfanyl-N(6)-dimethylallyladenosine(37) in tRNA + (sulfur carrier)-H + 5'-deoxyadenosine + L-methionine + A + S-adenosyl-L-homocysteine + 2 H(+). Its function is as follows. Catalyzes the methylthiolation of N6-(dimethylallyl)adenosine (i(6)A), leading to the formation of 2-methylthio-N6-(dimethylallyl)adenosine (ms(2)i(6)A) at position 37 in tRNAs that read codons beginning with uridine. The polypeptide is tRNA-2-methylthio-N(6)-dimethylallyladenosine synthase (Trichodesmium erythraeum (strain IMS101)).